An 82-amino-acid polypeptide reads, in one-letter code: RNA-binding protein Hfq (82 aa).

One can recognise a Sm domain in the interval 11–71 (DTFLNHVRKT…ISTIMPGAPI (61 aa)).

Belongs to the Hfq family. In terms of assembly, homohexamer.

Its function is as follows. RNA chaperone that binds small regulatory RNA (sRNAs) and mRNAs to facilitate mRNA translational regulation in response to envelope stress, environmental stress and changes in metabolite concentrations. Also binds with high specificity to tRNAs. In Bradyrhizobium diazoefficiens (strain JCM 10833 / BCRC 13528 / IAM 13628 / NBRC 14792 / USDA 110), this protein is RNA-binding protein Hfq.